Here is a 282-residue protein sequence, read N- to C-terminus: Phosphate import ATP-binding protein PstB (282 aa).

Residues 1–33 (MNMAETQLNPIARPTAPAGFDPAQSGQSQAPSR) are disordered. The region spanning 36–277 (IEINDLNFFY…PVRKETEDYI (242 aa)) is the ABC transporter domain. 68-75 (GPSGCGKS) is a binding site for ATP.

The protein belongs to the ABC transporter superfamily. Phosphate importer (TC 3.A.1.7) family. As to quaternary structure, the complex is composed of two ATP-binding proteins (PstB), two transmembrane proteins (PstC and PstA) and a solute-binding protein (PstS).

It localises to the cell inner membrane. The enzyme catalyses phosphate(out) + ATP + H2O = ADP + 2 phosphate(in) + H(+). In terms of biological role, part of the ABC transporter complex PstSACB involved in phosphate import. Responsible for energy coupling to the transport system. In Paraburkholderia xenovorans (strain LB400), this protein is Phosphate import ATP-binding protein PstB.